Reading from the N-terminus, the 282-residue chain is Acetyl-coenzyme A carboxylase carboxyl transferase subunit beta (282 aa).

The CoA carboxyltransferase N-terminal domain occupies 28-282 (IMTKCPSCRT…TKILDIHHVS (255 aa)). The Zn(2+) site is built by cysteine 32, cysteine 35, cysteine 51, and cysteine 54. The C4-type zinc-finger motif lies at 32–54 (CPSCRTIMYTKELKKNLYVCDSC).

This sequence belongs to the AccD/PCCB family. As to quaternary structure, acetyl-CoA carboxylase is a heterohexamer composed of biotin carboxyl carrier protein (AccB), biotin carboxylase (AccC) and two subunits each of ACCase subunit alpha (AccA) and ACCase subunit beta (AccD). Zn(2+) is required as a cofactor.

Its subcellular location is the cytoplasm. It carries out the reaction N(6)-carboxybiotinyl-L-lysyl-[protein] + acetyl-CoA = N(6)-biotinyl-L-lysyl-[protein] + malonyl-CoA. It participates in lipid metabolism; malonyl-CoA biosynthesis; malonyl-CoA from acetyl-CoA: step 1/1. Component of the acetyl coenzyme A carboxylase (ACC) complex. Biotin carboxylase (BC) catalyzes the carboxylation of biotin on its carrier protein (BCCP) and then the CO(2) group is transferred by the transcarboxylase to acetyl-CoA to form malonyl-CoA. The polypeptide is Acetyl-coenzyme A carboxylase carboxyl transferase subunit beta (Halalkalibacterium halodurans (strain ATCC BAA-125 / DSM 18197 / FERM 7344 / JCM 9153 / C-125) (Bacillus halodurans)).